The sequence spans 144 residues: Eukaryotic translation initiation factor 1A, X-chromosomal (144 aa).

The span at 1 to 15 (MPKNKGKGGKNRRRG) shows a compositional bias: basic residues. 2 disordered regions span residues 1-26 (MPKN…KREL) and 114-144 (KINE…IDDI). The span at 16 to 26 (KNENESEKREL) shows a compositional bias: basic and acidic residues. An S1-like domain is found at 22-96 (EKRELVFKED…NKADVILKYN (75 aa)). Positions 124-144 (GDDDEIQFDDIGDDDEDIDDI) are enriched in acidic residues.

The protein belongs to the eIF-1A family. In terms of assembly, component of the 43S pre-initiation complex (43S PIC), which is composed of the 40S ribosomal subunit, EIF1, eIF1A (EIF1AX), eIF3 complex, EIF5 and eIF2-GTP-initiator tRNA complex (eIF2 ternary complex). Interacts with EIF5; this interaction contributes to the maintenance of EIF1 within the open 43S PIC. Interacts through its C-terminal domain (CTD) with the CTD of EIF5B; from the location of the start codon by the 43S complex until the formation of the 80S complex. As to quaternary structure, (Microbial infection) Interacts with human respiratory syncytial virus (HRSV) nucleoprotein; this interaction recruits EIF1AX to the viral replication complex to facilitate viral genomic RNA synthesis and virus production.

It localises to the cytoplasm. In terms of biological role, component of the 43S pre-initiation complex (43S PIC), which binds to the mRNA cap-proximal region, scans mRNA 5'-untranslated region, and locates the initiation codon. This protein enhances formation of the cap-proximal complex. Together with EIF1, facilitates scanning, start codon recognition, promotion of the assembly of 48S complex at the initiation codon (43S PIC becomes 48S PIC after the start codon is reached), and dissociation of aberrant complexes. After start codon location, together with EIF5B orients the initiator methionine-tRNA in a conformation that allows 60S ribosomal subunit joining to form the 80S initiation complex. Is released after 80S initiation complex formation, just after GTP hydrolysis by EIF5B, and before release of EIF5B. Its globular part is located in the A site of the 40S ribosomal subunit. Its interaction with EIF5 during scanning contribute to the maintenance of EIF1 within the open 43S PIC. In contrast to yeast orthologs, does not bind EIF1. This Homo sapiens (Human) protein is Eukaryotic translation initiation factor 1A, X-chromosomal (EIF1AX).